We begin with the raw amino-acid sequence, 415 residues long: Casein kinase I isoform delta (415 aa).

The 269-residue stretch at 9 to 277 (YRLGRKIGSG…YLRQLFRNLF (269 aa)) folds into the Protein kinase domain. ATP is bound by residues 15–23 (IGSGSFGDI) and Lys-38. Catalysis depends on Asp-128, which acts as the Proton acceptor. The centrosomal localization signal (CLS) stretch occupies residues 278-364 (HRQGFSYDYV…TSPRPVSGME (87 aa)). The span at 301–315 (ADDAERERRDREERL) shows a compositional bias: basic and acidic residues. The interval 301-415 (ADDAERERRD…SSGLQSVVHR (115 aa)) is disordered. Residues 317 to 342 (HSRNPATRGLPSTASGRLRGTQEVAP) are autoinhibitory. Phosphoserine occurs at positions 328 and 331. Residues 347 to 358 (TPTSHTANTSPR) show a composition bias toward polar residues. Phosphoserine is present on Ser-370. Position 375 is an omega-N-methylarginine (Arg-375). Positions 380–400 (NISSSDLTGRQDTSRMSTSQI) are enriched in polar residues. Phosphoserine occurs at positions 382, 383, 384, 407, and 411.

Belongs to the protein kinase superfamily. CK1 Ser/Thr protein kinase family. Casein kinase I subfamily. As to quaternary structure, monomer. Component of the circadian core oscillator, which includes the CRY proteins, CLOCK, or NPAS2, ARTNL/BMAL1 or ARTNL2/BMAL2, CSNK1D and/or CSNK1E, TIMELESS and the PER proteins. Interacts with DNMT1 and MAP1A. Interacts directly with PER1 and PER2 which may lead to their degradation. Interacts with MAPT/TAU, SNAPIN, DBNDD2, AIB1/NCOA3 and ESR1. Interacts with AKAP9/AKAP450; this interaction promotes centrosomal subcellular location. Binds to tubulins in mitotic cells upon DNA damage. Interacts with GJA1. Interacts with DDX3X; this interaction enhances CSNK1D kinase activity in vitro, but it is unclear whether this interaction is physiologically relevant. Interacts with FAM83A, FAM83B, FAM83E and FAM83H (via DUF1669). Autophosphorylated on serine and threonine residues; this autophosphorylation represses activity. Reactivated by phosphatase-mediated dephosphorylation. May be dephosphorylated by PP1.

Its subcellular location is the cytoplasm. It localises to the nucleus. The protein resides in the cytoskeleton. The protein localises to the microtubule organizing center. It is found in the centrosome. Its subcellular location is the perinuclear region. It localises to the cell membrane. The protein resides in the spindle. The protein localises to the golgi apparatus. The catalysed reaction is L-seryl-[protein] + ATP = O-phospho-L-seryl-[protein] + ADP + H(+). The enzyme catalyses L-threonyl-[protein] + ATP = O-phospho-L-threonyl-[protein] + ADP + H(+). It catalyses the reaction L-seryl-[tau protein] + ATP = O-phospho-L-seryl-[tau protein] + ADP + H(+). It carries out the reaction L-threonyl-[tau protein] + ATP = O-phospho-L-threonyl-[tau protein] + ADP + H(+). Exhibits substrate-dependent heparin activation. Drug-mediated inhibition leads to a delay of the oscillations with the magnitude of this effect dependent upon the timing of drug administration. Inhibited by phosphorylation. Essential serine/threonine-protein kinase that regulates diverse cellular growth and survival processes including Wnt signaling, DNA repair and circadian rhythms. It can phosphorylate a large number of proteins. Casein kinases are operationally defined by their preferential utilization of acidic proteins such as caseins as substrates. Phosphorylates connexin-43/GJA1, MAP1A, SNAPIN, MAPT/TAU, TOP2A, DCK, HIF1A, EIF6, p53/TP53, DVL2, DVL3, ESR1, AIB1/NCOA3, DNMT1, PKD2, YAP1, PER1 and PER2. Central component of the circadian clock. In balance with PP1, determines the circadian period length through the regulation of the speed and rhythmicity of PER1 and PER2 phosphorylation. Controls PER1 and PER2 nuclear transport and degradation. YAP1 phosphorylation promotes its SCF(beta-TRCP) E3 ubiquitin ligase-mediated ubiquitination and subsequent degradation. DNMT1 phosphorylation reduces its DNA-binding activity. Phosphorylation of ESR1 and AIB1/NCOA3 stimulates their activity and coactivation. Phosphorylation of DVL2 and DVL3 regulates WNT3A signaling pathway that controls neurite outgrowth. Phosphorylates NEDD9/HEF1. EIF6 phosphorylation promotes its nuclear export. Triggers down-regulation of dopamine receptors in the forebrain. Activates DCK in vitro by phosphorylation. TOP2A phosphorylation favors DNA cleavable complex formation. May regulate the formation of the mitotic spindle apparatus in extravillous trophoblast. Modulates connexin-43/GJA1 gap junction assembly by phosphorylation. Probably involved in lymphocyte physiology. Regulates fast synaptic transmission mediated by glutamate. The polypeptide is Casein kinase I isoform delta (CSNK1D) (Pongo abelii (Sumatran orangutan)).